A 1202-amino-acid chain; its full sequence is Liprin-alpha-1 (1202 aa).

The segment at 1–33 is disordered; that stretch reads MMCEVMPTISEAEGPPGGGGGHGSGSPSQPDAD. The segment covering 15–24 has biased composition (gly residues); it reads PPGGGGGHGS. Residues 34–141 are a coiled coil; sequence SHFEQLMVSM…VSRHERSLRM (108 aa). Serine 150 is subject to Phosphoserine. Residues 176-214 are a coiled coil; it reads EKVRERLRVALERCSLLEEELGATHKELMILKEQNNQKK. Disordered regions lie at residues 224–245 and 426–446; these read NHEQ…SLSH and KNQE…HNKR. Threonine 230 carries the post-translational modification Phosphothreonine. A phosphoserine mark is found at serine 239, serine 242, and serine 244. 2 coiled-coil regions span residues 249–521 and 623–669; these read LAKV…GASL and ADAH…SGSL. Serine 448 is modified (phosphoserine). The segment covering 651–662 has biased composition (basic and acidic residues); the sequence is ENTEQRAEEIES. Residues 651-855 form a disordered region; it reads ENTEQRAEEI…SKLGGQAEKN (205 aa). Serine 666, serine 668, and serine 693 each carry phosphoserine. The segment covering 686-700 has biased composition (low complexity); sequence ASSLASSSPPGSGRS. Positions 725 to 736 are enriched in basic and acidic residues; it reads SREEVRDDKTTI. Threonine 761 carries the phosphothreonine modification. Residues 762–771 show a composition bias toward basic and acidic residues; that stretch reads VSHEDIRDIR. Serine 763 carries the phosphoserine modification. The segment covering 832–841 has biased composition (polar residues); the sequence is VSETDNSSQD. Residues 847–871 are a coiled coil; the sequence is KLGGQAEKNRKLQKKHELLEEARRQ. 3 consecutive SAM domains span residues 878–944, 963–1027, and 1051–1120; these read WDGP…IMSL, NHEW…LRRL, and WSND…LLVM. The stretch at 1021–1050 forms a coiled coil; that stretch reads IMCLRRLNYDRKELERKREESQSEIKDVLV. Serine 1133 carries the phosphoserine modification. Threonine 1159 is modified (phosphothreonine). Residues 1163–1202 are disordered; sequence NFRVTSSMSSPSMQPKKMQMDGNVSGTQRLDSATVRTYSC. Residues 1168-1179 show a composition bias toward low complexity; that stretch reads SSMSSPSMQPKK. Polar residues predominate over residues 1184–1202; that stretch reads GNVSGTQRLDSATVRTYSC.

It belongs to the liprin family. Liprin-alpha subfamily. Homodimer. Interacts with PTPRF (via D2 domain). Part of a cortical microtubule stabilization complex (CMSC) composed of KANK1, PPFIA1, PPFIBP1, ERC1/ELKS, PHLDB2/LL5beta, CLASPs, KIF21A and possibly additional interactors; within CMSCs KANK1 and PHLDB2/LL5beta seem to be the core components for recruiting microtubule-binding proteins KIF21A and CLASPs, whereas PPFIA1, PPFIBP1 and ERC1/ELKS serve as scaffolds for protein clustering. Ubiquitous.

The protein localises to the cytoplasm. Its subcellular location is the cell cortex. In terms of biological role, may regulate the disassembly of focal adhesions. May localize receptor-like tyrosine phosphatases type 2A at specific sites on the plasma membrane, possibly regulating their interaction with the extracellular environment and their association with substrates. The chain is Liprin-alpha-1 (PPFIA1) from Homo sapiens (Human).